The following is a 331-amino-acid chain: Cytosolic arginine sensor for mTORC1 subunit 1 (331 aa).

Residue Ser-14 is modified to Phosphoserine. ACT domains lie at 72–137 (AEAT…HTLA) and 259–320 (GELW…DILQ). L-arginine contacts are provided by residues 110–111 (SV), Gly-273, 279–280 (IV), and 299–303 (TFNFD).

It belongs to the GATS family. Forms homodimers and heterodimers with CASTOR2. Interacts with the GATOR2 complex which is composed of MIOS, SEC13, SEH1L, WDR24 and WDR59; the interaction is negatively regulated by arginine. Interacts with TM4SF5; the interaction is positively regulated by leucine and is negatively regulated by arginine. Phosphorylation at Ser-14 by AKT1, promoting the interaction between CASTOR1 and RNF167. In terms of processing, ubiquitinated by RNF167 via 'Lys-29'-polyubiquitination, leading to its degradation, releasing the GATOR2 complex. Ubiquitination by RNF167 is promoted by phosphorylation at Ser-14 by AKT1.

The protein resides in the cytoplasm. Its subcellular location is the cytosol. Functions as an intracellular arginine sensor within the amino acid-sensing branch of the TORC1 signaling pathway. As a homodimer or a heterodimer with CASTOR2, binds and inhibits the GATOR subcomplex GATOR2 and thereby mTORC1. Binding of arginine to CASTOR1 allosterically disrupts the interaction of CASTOR1-containing dimers with GATOR2 which can in turn activate mTORC1 and the TORC1 signaling pathway. This Mus musculus (Mouse) protein is Cytosolic arginine sensor for mTORC1 subunit 1.